A 252-amino-acid polypeptide reads, in one-letter code: 2-succinyl-6-hydroxy-2,4-cyclohexadiene-1-carboxylate synthase (252 aa).

This sequence belongs to the AB hydrolase superfamily. MenH family. As to quaternary structure, monomer.

It catalyses the reaction 5-enolpyruvoyl-6-hydroxy-2-succinyl-cyclohex-3-ene-1-carboxylate = (1R,6R)-6-hydroxy-2-succinyl-cyclohexa-2,4-diene-1-carboxylate + pyruvate. It participates in quinol/quinone metabolism; 1,4-dihydroxy-2-naphthoate biosynthesis; 1,4-dihydroxy-2-naphthoate from chorismate: step 3/7. The protein operates within quinol/quinone metabolism; menaquinone biosynthesis. Catalyzes a proton abstraction reaction that results in 2,5-elimination of pyruvate from 2-succinyl-5-enolpyruvyl-6-hydroxy-3-cyclohexene-1-carboxylate (SEPHCHC) and the formation of 2-succinyl-6-hydroxy-2,4-cyclohexadiene-1-carboxylate (SHCHC). The polypeptide is 2-succinyl-6-hydroxy-2,4-cyclohexadiene-1-carboxylate synthase (Salmonella enteritidis PT4 (strain P125109)).